We begin with the raw amino-acid sequence, 308 residues long: Cilia- and flagella-associated protein 73 (308 aa).

Coiled-coil stretches lie at residues 34–143 (RLLE…LEPC) and 175–233 (AALR…WESK).

Belongs to the CFAP73 family.

It localises to the cytoplasm. The protein localises to the cytoskeleton. It is found in the cilium axoneme. May play a role in ciliary/flagellar motility by regulating the assembly and the activity of axonemal inner dynein arm. This Homo sapiens (Human) protein is Cilia- and flagella-associated protein 73.